Here is a 96-residue protein sequence, read N- to C-terminus: Conantokin-E (96 aa).

The signal sequence occupies residues 1–24 (LLVPLVTFHLILGMGTLDHGGALT). A propeptide spanning residues 25–72 (ERRSADATALKPEPVLLQKSDARSTDDNDKDRLTQMKRILKKRGNKAR) is cleaved from the precursor. The tract at residues 28–57 (SADATALKPEPVLLQKSDARSTDDNDKDRL) is disordered. Over residues 44 to 57 (SDARSTDDNDKDRL) the composition is skewed to basic and acidic residues. Residues Glu75, Glu76, Glu82, Glu86, and Glu95 each carry the 4-carboxyglutamate modification. Residues Glu82 and Glu86 each contribute to the a divalent metal cation site. Residues Cys83 and Cys96 are joined by a disulfide bond.

The protein belongs to the conotoxin B superfamily. In terms of tissue distribution, expressed by the venom duct.

It is found in the secreted. Functionally, conantokins inhibit N-methyl-D-aspartate (NMDA) receptors. This toxin has the highest potency for the NR2B/GRIN2B subunit, followed by NR2A/GRIN2A, NR2C/GRIN2C, and NR2D/GRIN2D subunits. This is Conantokin-E from Conus ermineus (Agate cone).